A 135-amino-acid polypeptide reads, in one-letter code: ATP synthase epsilon chain (135 aa).

It belongs to the ATPase epsilon chain family. In terms of assembly, F-type ATPases have 2 components, CF(1) - the catalytic core - and CF(0) - the membrane proton channel. CF(1) has five subunits: alpha(3), beta(3), gamma(1), delta(1), epsilon(1). CF(0) has three main subunits: a, b and c.

The protein localises to the cell inner membrane. Functionally, produces ATP from ADP in the presence of a proton gradient across the membrane. The protein is ATP synthase epsilon chain of Rhodopseudomonas palustris (strain ATCC BAA-98 / CGA009).